A 185-amino-acid chain; its full sequence is Large ribosomal subunit protein uL5 (185 aa).

Belongs to the universal ribosomal protein uL5 family. Part of the 50S ribosomal subunit; part of the 5S rRNA/L5/L18/L25 subcomplex. Contacts the 5S rRNA and the P site tRNA. Forms a bridge to the 30S subunit in the 70S ribosome.

Functionally, this is one of the proteins that bind and probably mediate the attachment of the 5S RNA into the large ribosomal subunit, where it forms part of the central protuberance. In the 70S ribosome it contacts protein S13 of the 30S subunit (bridge B1b), connecting the 2 subunits; this bridge is implicated in subunit movement. Contacts the P site tRNA; the 5S rRNA and some of its associated proteins might help stabilize positioning of ribosome-bound tRNAs. In Rhodopseudomonas palustris (strain BisB5), this protein is Large ribosomal subunit protein uL5.